Reading from the N-terminus, the 128-residue chain is MSCSSLCAPACVATPTPLADSCNEPCVRQCPDSTVVIQPPATVVTFPGPILSSFPQYAAVGSAGVPAVGSGMGGTFGRGAGFGGYGGLGGYGGYGGLGGYGGYGGFGSCGYGGFGRGYRSLLGSCGPC.

Repeat copies occupy residues 83 to 91 (GGYGGLGGY) and 92 to 100 (GGYGGLGGY). The segment at 83–104 (GGYGGLGGYGGYGGLGGYGGYG) is 3 X 9 AA tandem repeats, Gly-rich. A 3; approximate repeat occupies 101–109 (GGYGGFGSC).

The protein belongs to the avian keratin family. In terms of tissue distribution, abundantly expressed in the claw and at a low level in feather tissue.

In Gallus gallus (Chicken), this protein is Claw keratin (CKER1).